We begin with the raw amino-acid sequence, 97 residues long: Osteocalcin (97 aa).

The N-terminal stretch at 1–18 is a signal peptide; sequence MKTLAFLVLCSLAAICLT. The propeptide occupies 19–52; sequence SDASTGSQPASDNPADEGMFVERDQASAVVRQKR. The 41-residue stretch at 53–93 folds into the Gla domain; that stretch reads AAGQLSLTQLESLREVCELNLACEHMMDTEGIIAAYTAYYG. Ca(2+) contacts are provided by E63, E67, E70, and E76. 4-carboxyglutamate occurs at positions 63, 67, and 70. An intrachain disulfide couples C69 to C75.

Belongs to the osteocalcin/matrix Gla protein family. Gamma-carboxyglutamate residues are formed by vitamin K dependent carboxylation by GGCX. These residues are essential for the binding of calcium.

The protein resides in the secreted. The carboxylated form is one of the main organic components of the bone matrix, which constitutes 1-2% of the total bone protein. The carboxylated form binds strongly to apatite and calcium. The protein is Osteocalcin (bglap) of Sparus aurata (Gilthead sea bream).